The sequence spans 329 residues: Olfactory receptor 52L1 (329 aa).

Topologically, residues 1-43 are extracellular; sequence MTLVSFFSFLSKPLIMLLSNSSWRLSQPSFLLVGIPGLEESQH. N20 carries an N-linked (GlcNAc...) asparagine glycan. A helical transmembrane segment spans residues 44–64; that stretch reads WIALPLGILYLLALVGNVTIL. The Cytoplasmic portion of the chain corresponds to 65-72; it reads FIIWMDPS. A helical membrane pass occupies residues 73 to 93; that stretch reads LHQSMYLFLSMLAAIDLVLAS. The Extracellular portion of the chain corresponds to 94–117; that stretch reads STAPKALAVLLVHAHEIGYIVCLI. A disulfide bridge links C115 with C207. A helical membrane pass occupies residues 118-138; the sequence is QMFFIHAFSSMESGVLVAMAL. The Cytoplasmic segment spans residues 139-157; that stretch reads DRYVAICHPLHHSTILHPG. The helical transmembrane segment at 158–178 threads the bilayer; it reads VIGRIGMVVLVRGLLLLIPFP. The Extracellular portion of the chain corresponds to 179–214; sequence ILLGTLIFCQATIIGHAYCEHMAVVKLACSETTVNR. A helical transmembrane segment spans residues 215-235; the sequence is AYGLTMALLVIGLDVLAIGVS. Residues 236–255 lie on the Cytoplasmic side of the membrane; it reads YAHILQAVLKVPGSEARLKA. The chain crosses the membrane as a helical span at residues 256–276; that stretch reads FSTCGSHICVILVFYVPGIFS. At 277–291 the chain is on the extracellular side; the sequence is FLTHRFGHHVPHHVH. Residues 292–312 traverse the membrane as a helical segment; that stretch reads VLLATRYLLMPPALNPLVYGV. Over 313–329 the chain is Cytoplasmic; that stretch reads KTQQIRQRVLRVFTQKD.

The protein belongs to the G-protein coupled receptor 1 family.

The protein resides in the cell membrane. Its function is as follows. Odorant receptor. The polypeptide is Olfactory receptor 52L1 (OR52L1) (Homo sapiens (Human)).